The sequence spans 287 residues: Phosphatidylserine decarboxylase proenzyme (287 aa).

Catalysis depends on charge relay system; for autoendoproteolytic cleavage activity residues aspartate 86, histidine 143, and serine 250. Serine 250 acts as the Schiff-base intermediate with substrate; via pyruvic acid; for decarboxylase activity in catalysis. Serine 250 bears the Pyruvic acid (Ser); by autocatalysis mark.

Belongs to the phosphatidylserine decarboxylase family. PSD-B subfamily. Prokaryotic type I sub-subfamily. In terms of assembly, heterodimer of a large membrane-associated beta subunit and a small pyruvoyl-containing alpha subunit. The cofactor is pyruvate. Post-translationally, is synthesized initially as an inactive proenzyme. Formation of the active enzyme involves a self-maturation process in which the active site pyruvoyl group is generated from an internal serine residue via an autocatalytic post-translational modification. Two non-identical subunits are generated from the proenzyme in this reaction, and the pyruvate is formed at the N-terminus of the alpha chain, which is derived from the carboxyl end of the proenzyme. The autoendoproteolytic cleavage occurs by a canonical serine protease mechanism, in which the side chain hydroxyl group of the serine supplies its oxygen atom to form the C-terminus of the beta chain, while the remainder of the serine residue undergoes an oxidative deamination to produce ammonia and the pyruvoyl prosthetic group on the alpha chain. During this reaction, the Ser that is part of the protease active site of the proenzyme becomes the pyruvoyl prosthetic group, which constitutes an essential element of the active site of the mature decarboxylase.

Its subcellular location is the cell membrane. It carries out the reaction a 1,2-diacyl-sn-glycero-3-phospho-L-serine + H(+) = a 1,2-diacyl-sn-glycero-3-phosphoethanolamine + CO2. It functions in the pathway phospholipid metabolism; phosphatidylethanolamine biosynthesis; phosphatidylethanolamine from CDP-diacylglycerol: step 2/2. In terms of biological role, catalyzes the formation of phosphatidylethanolamine (PtdEtn) from phosphatidylserine (PtdSer). The protein is Phosphatidylserine decarboxylase proenzyme of Wigglesworthia glossinidia brevipalpis.